A 65-amino-acid polypeptide reads, in one-letter code: Metallothionein-like protein type 3 (65 aa).

The protein belongs to the metallothionein superfamily. Type 15 family.

Functionally, metallothioneins have a high content of cysteine residues that bind various heavy metals. The protein is Metallothionein-like protein type 3 of Carica papaya (Papaya).